We begin with the raw amino-acid sequence, 263 residues long: MASLWLLSCFSLVGAAFGCGVPAIHPVLSGLSRIVNGEDAVPGSWPWQVSLQDKTGFHFCGGSLISEDWVVTAAHCGVRTSDVVVAGEFDQGSDEENIQVLKIAKVFKNPKFSILTVNNDITLLKLATPARFSQTVSAVCLPSADDDFPAGTLCATTGWGKTKYNANKTPDKLQQAALPLLSNAECKKSWGRRITDVMICAGASGVSSCMGDSGGPLVCQKDGAWTLVGIVSWGSDTCSTSSPGVYARVTKLIPWVQKILAAN.

The first 18 residues, 1–18, serve as a signal peptide directing secretion; sequence MASLWLLSCFSLVGAAFG. Cystine bridges form between cysteine 19-cysteine 140, cysteine 60-cysteine 76, cysteine 154-cysteine 219, cysteine 186-cysteine 200, and cysteine 209-cysteine 238. Residues 34 to 261 form the Peptidase S1 domain; that stretch reads IVNGEDAVPG…LIPWVQKILA (228 aa). The Charge relay system role is filled by histidine 75. Residue serine 93 is modified to Phosphoserine. The active-site Charge relay system is aspartate 120. The active-site Charge relay system is serine 213.

It belongs to the peptidase S1 family.

The protein localises to the secreted. It is found in the extracellular space. It carries out the reaction Preferential cleavage: Tyr-|-Xaa, Trp-|-Xaa, Phe-|-Xaa, Leu-|-Xaa.. This chain is Chymotrypsinogen B, found in Homo sapiens (Human).